The chain runs to 123 residues: Small ribosomal subunit protein uS13 (123 aa).

Residues 93–123 form a disordered region; sequence RRNLPVRGQKTKTNARTRKGPKRAIGGKKKK.

It belongs to the universal ribosomal protein uS13 family. Part of the 30S ribosomal subunit. Forms a loose heterodimer with protein S19. Forms two bridges to the 50S subunit in the 70S ribosome.

Functionally, located at the top of the head of the 30S subunit, it contacts several helices of the 16S rRNA. In the 70S ribosome it contacts the 23S rRNA (bridge B1a) and protein L5 of the 50S subunit (bridge B1b), connecting the 2 subunits; these bridges are implicated in subunit movement. Contacts the tRNAs in the A and P-sites. In Clostridium botulinum (strain Loch Maree / Type A3), this protein is Small ribosomal subunit protein uS13.